The sequence spans 997 residues: Translation initiation factor IF-2 (997 aa).

Residues 101 to 406 form a disordered region; sequence ELAAEQAAAR…SRNQHQDRRH (306 aa). Composition is skewed to low complexity over residues 116–185 and 195–209; these read AEAV…QAEP and AAPA…EPAK. Polar residues predominate over residues 231 to 242; sequence TELTSQTPTPVA. The span at 256–280 shows a compositional bias: low complexity; that stretch reads AEPAAAPKTTAKPGEIRRAAAPAAP. The segment covering 281-292 has biased composition (basic and acidic residues); that stretch reads DRAREEARRAAE. The span at 385 to 394 shows a compositional bias: gly residues; the sequence is RAGGKGGRGG. A tr-type G domain is found at 498-665; that stretch reads PRAPVVTVMG…NVLLQAEILE (168 aa). Positions 507–514 are G1; that stretch reads GHVDHGKT. Residue 507–514 participates in GTP binding; that stretch reads GHVDHGKT. The interval 532–536 is G2; the sequence is GITQH. The segment at 553 to 556 is G3; that stretch reads DTPG. Residues 553–557 and 607–610 contribute to the GTP site; these read DTPGH and NKID. A G4 region spans residues 607 to 610; sequence NKID. The interval 643-645 is G5; that stretch reads SAK.

This sequence belongs to the TRAFAC class translation factor GTPase superfamily. Classic translation factor GTPase family. IF-2 subfamily.

Its subcellular location is the cytoplasm. Functionally, one of the essential components for the initiation of protein synthesis. Protects formylmethionyl-tRNA from spontaneous hydrolysis and promotes its binding to the 30S ribosomal subunits. Also involved in the hydrolysis of GTP during the formation of the 70S ribosomal complex. In Bordetella pertussis (strain Tohama I / ATCC BAA-589 / NCTC 13251), this protein is Translation initiation factor IF-2.